We begin with the raw amino-acid sequence, 460 residues long: Carboxypeptidase DacB (460 aa).

Positions 1–28 (MRPTRWRRSTHVAVGVAVLALVVAVVAA) are cleaved as a signal peptide. The segment at 39–64 (AAEAVPPAPPPATADPGVVPVDLSAP) is disordered. Ser113 serves as the catalytic Acyl-ester intermediate. Lys116 (proton acceptor) is an active-site residue. Residue Ser294 is part of the active site.

The protein belongs to the peptidase S13 family.

In terms of biological role, carboxypeptidase that cleaves terminal D-alanine from peptidoglycan in the mycobacterial cell wall. May cleave L-Lys-D-Ala and/or D-Ala-D-Ala peptide bonds. Exerts important effects on mycobacterial cell morphology and cell division. In Mycolicibacterium smegmatis (strain ATCC 700084 / mc(2)155) (Mycobacterium smegmatis), this protein is Carboxypeptidase DacB.